The chain runs to 185 residues: Ribosome-recycling factor (185 aa).

Residues 138 to 159 are disordered; that stretch reads KVKKLEKDKEISEDESKKAQEQ.

It belongs to the RRF family.

Its subcellular location is the cytoplasm. Functionally, responsible for the release of ribosomes from messenger RNA at the termination of protein biosynthesis. May increase the efficiency of translation by recycling ribosomes from one round of translation to another. This Helicobacter acinonychis (strain Sheeba) protein is Ribosome-recycling factor.